The primary structure comprises 211 residues: Octanoyltransferase (211 aa).

The BPL/LPL catalytic domain occupies D32 to K211. Substrate is bound by residues R71–H78, A145–G147, and G158–A160. The Acyl-thioester intermediate role is filled by C176.

The protein belongs to the LipB family.

The protein localises to the cytoplasm. The enzyme catalyses octanoyl-[ACP] + L-lysyl-[protein] = N(6)-octanoyl-L-lysyl-[protein] + holo-[ACP] + H(+). The protein operates within protein modification; protein lipoylation via endogenous pathway; protein N(6)-(lipoyl)lysine from octanoyl-[acyl-carrier-protein]: step 1/2. Its function is as follows. Catalyzes the transfer of endogenously produced octanoic acid from octanoyl-acyl-carrier-protein onto the lipoyl domains of lipoate-dependent enzymes. Lipoyl-ACP can also act as a substrate although octanoyl-ACP is likely to be the physiological substrate. This chain is Octanoyltransferase, found in Rickettsia massiliae (strain Mtu5).